We begin with the raw amino-acid sequence, 321 residues long: MIDFRPFYQQIAVSELSSWLETLPSQLARWQKQTHGEYAKWAKIVDFLPHLKTARIDLKTAVKSEPVSPLSQGEQQRIIYHLKQLMPWRKGPYHLHGIHVDCEWRSDFKWDRVLPHLAPLQDRLILDVGCGSGYHMWRMVGEGAKMVVGIDPTELFLCQFEAVRKLLNNDRRANLIPLGIEEMQPLGVFDTVFSMGVLYHRKSPLDHLSQLKNQLRKGGELVLETLVTDGDEHHVLVPAERYAKMKNVYFIPSVPCLINWLEKSGFSNVRCVDVEVTSLEEQRKTEWLENESLIDFLDPNDHSKTIEGYPAPKRAVILANK.

Carboxy-S-adenosyl-L-methionine-binding positions include lysine 90, tryptophan 104, lysine 109, glycine 129, 151–153 (DPT), 180–181 (IE), methionine 195, tyrosine 199, and arginine 314.

The protein belongs to the class I-like SAM-binding methyltransferase superfamily. CmoB family. In terms of assembly, homotetramer.

The catalysed reaction is carboxy-S-adenosyl-L-methionine + 5-hydroxyuridine(34) in tRNA = 5-carboxymethoxyuridine(34) in tRNA + S-adenosyl-L-homocysteine + H(+). Functionally, catalyzes carboxymethyl transfer from carboxy-S-adenosyl-L-methionine (Cx-SAM) to 5-hydroxyuridine (ho5U) to form 5-carboxymethoxyuridine (cmo5U) at position 34 in tRNAs. The protein is tRNA U34 carboxymethyltransferase of Mannheimia succiniciproducens (strain KCTC 0769BP / MBEL55E).